We begin with the raw amino-acid sequence, 118 residues long: Immunoglobulin lambda variable 2-8 (118 aa).

The first 19 residues, M1–A19, serve as a signal peptide directing secretion. Position 20 is a pyrrolidone carboxylic acid (Q20). Residues Q20–T44 are framework-1. In terms of domain architecture, Ig-like spans Q20–F118. C41 and C109 form a disulfide bridge. Positions S45–Y53 are complementarity-determining-1. Positions V54 to Y70 are framework-2. A complementarity-determining-2 region spans residues E71–S73. The framework-3 stretch occupies residues K74–C109. The disordered stretch occupies residues P76–S97. The segment covering G85–S97 has biased composition (polar residues). The interval S110–F118 is complementarity-determining-3.

As to quaternary structure, immunoglobulins are composed of two identical heavy chains and two identical light chains; disulfide-linked.

The protein localises to the secreted. The protein resides in the cell membrane. In terms of biological role, v region of the variable domain of immunoglobulin light chains that participates in the antigen recognition. Immunoglobulins, also known as antibodies, are membrane-bound or secreted glycoproteins produced by B lymphocytes. In the recognition phase of humoral immunity, the membrane-bound immunoglobulins serve as receptors which, upon binding of a specific antigen, trigger the clonal expansion and differentiation of B lymphocytes into immunoglobulins-secreting plasma cells. Secreted immunoglobulins mediate the effector phase of humoral immunity, which results in the elimination of bound antigens. The antigen binding site is formed by the variable domain of one heavy chain, together with that of its associated light chain. Thus, each immunoglobulin has two antigen binding sites with remarkable affinity for a particular antigen. The variable domains are assembled by a process called V-(D)-J rearrangement and can then be subjected to somatic hypermutations which, after exposure to antigen and selection, allow affinity maturation for a particular antigen. This is Immunoglobulin lambda variable 2-8 from Homo sapiens (Human).